Here is a 179-residue protein sequence, read N- to C-terminus: Large ribosomal subunit protein uL5 (179 aa).

It belongs to the universal ribosomal protein uL5 family. Part of the 50S ribosomal subunit; part of the 5S rRNA/L5/L18/L25 subcomplex. Contacts the 5S rRNA and the P site tRNA. Forms a bridge to the 30S subunit in the 70S ribosome.

Functionally, this is one of the proteins that bind and probably mediate the attachment of the 5S RNA into the large ribosomal subunit, where it forms part of the central protuberance. In the 70S ribosome it contacts protein S13 of the 30S subunit (bridge B1b), connecting the 2 subunits; this bridge is implicated in subunit movement. Contacts the P site tRNA; the 5S rRNA and some of its associated proteins might help stabilize positioning of ribosome-bound tRNAs. The sequence is that of Large ribosomal subunit protein uL5 from Burkholderia multivorans (strain ATCC 17616 / 249).